The sequence spans 66 residues: Pteroicidin-alpha (66 aa).

The signal sequence occupies residues 1 to 22 (MKCIALFLVLSMVVLMAEPGEA). Arginine 43 is subject to Arginine amide; partial. The propeptide occupies 44 to 66 (GKNRDMAEQQELERAFDRERAFA).

It belongs to the pleurocidin family. This peptide exists in N-terminally amidated and non-amidated forms. The amidated form is more active and has a greater alpha-helix content than the non-amidated form. As to expression, expressed in gill, skin, intestine, spleen, anterior kidney, and blood cells.

The protein localises to the secreted. The amidated peptide is bactericidal on human pathogens like S.aureus or E.coli, as well as on the fish pathogen A.salmonicida. May also be active against a variety of fungi. It can kill bacteria in less than 30 minutes (S.aureus) and 120 minutes (V.vulnificus). It induces hemolysis of erythrocytes from human and fishes (sea bass and lesser-spotted dogfish). In terms of biological role, the non-amidated peptide only inhibits growth of human pathogens like S.aureus or E.coli, and the fish pathogen A.salmonicida. Induces hemolysis of erythrocytes from human and fishes (sea bass and lesser-spotted dogfish). The polypeptide is Pteroicidin-alpha (Pterois volitans (Red lionfish)).